The sequence spans 311 residues: Syndecan-1 (311 aa).

Residues Met1 to Pro22 form the signal peptide. The Extracellular portion of the chain corresponds to Gln23–Gly255. 2 disordered regions span residues Val29 to Gln59 and Ser152 to Gly184. Residues Glu32–Asp42 are compositionally biased toward acidic residues. O-linked (Xyl...) (chondroitin sulfate) serine glycosylation occurs at Ser37. Asn43 carries N-linked (GlcNAc...) asparagine glycosylation. Ser45 and Ser47 each carry an O-linked (Xyl...) (heparan sulfate) serine glycan. O-linked (Xyl...) (chondroitin sulfate) serine glycans are attached at residues Ser207 and Ser217. Residues Gly256–Leu276 traverse the membrane as a helical segment. Residues Tyr277–Ala311 are Cytoplasmic-facing. The tract at residues Gly285–Ala311 is disordered. Phosphoserine is present on Ser286.

The protein belongs to the syndecan proteoglycan family. As to quaternary structure, interacts with CDCP1. Interacts (via C-terminus) with TIAM1 (via PDZ domain). Interacts with MDK. In terms of processing, shedding is enhanced by a number of factors such as heparanase, thrombin or EGF. Also by stress and wound healing. PMA-mediated shedding is inhibited by TIMP3.

The protein resides in the membrane. It is found in the secreted. Its subcellular location is the extracellular exosome. Functionally, cell surface proteoglycan that contains both heparan sulfate and chondroitin sulfate and that links the cytoskeleton to the interstitial matrix. Regulates exosome biogenesis in concert with SDCBP and PDCD6IP. Able to induce its own expression in dental mesenchymal cells and also in the neighboring dental epithelial cells via an MSX1-mediated pathway. The protein is Syndecan-1 of Mus musculus (Mouse).